The primary structure comprises 228 residues: Probable octanoyltransferase (228 aa).

The 172-residue stretch at 27-198 folds into the BPL/LPL catalytic domain; it reads SGGDDAFILV…AFEEVFEAKV (172 aa). Substrate is bound by residues 65–72, 129–131, and 142–144; these read RGGDATYH, SIG, and GVA. Catalysis depends on C160, which acts as the Acyl-thioester intermediate.

It belongs to the LipB family.

The protein resides in the cytoplasm. The enzyme catalyses octanoyl-[ACP] + L-lysyl-[protein] = N(6)-octanoyl-L-lysyl-[protein] + holo-[ACP] + H(+). The protein operates within protein modification; protein lipoylation via endogenous pathway; protein N(6)-(lipoyl)lysine from octanoyl-[acyl-carrier-protein]: step 1/2. In terms of biological role, catalyzes the transfer of endogenously produced octanoic acid from octanoyl-acyl-carrier-protein onto the lipoyl domains of lipoate-dependent enzymes. Lipoyl-ACP can also act as a substrate although octanoyl-ACP is likely to be the physiological substrate. This is Probable octanoyltransferase from Pyrobaculum calidifontis (strain DSM 21063 / JCM 11548 / VA1).